Consider the following 127-residue polypeptide: Aspartate 1-decarboxylase (127 aa).

The active-site Schiff-base intermediate with substrate; via pyruvic acid is the Ser-25. Ser-25 is modified (pyruvic acid (Ser)). Position 57 (Thr-57) interacts with substrate. Residue Tyr-58 is the Proton donor of the active site. A substrate-binding site is contributed by 73-75; that stretch reads GAA.

It belongs to the PanD family. As to quaternary structure, heterooctamer of four alpha and four beta subunits. Pyruvate serves as cofactor. In terms of processing, is synthesized initially as an inactive proenzyme, which is activated by self-cleavage at a specific serine bond to produce a beta-subunit with a hydroxyl group at its C-terminus and an alpha-subunit with a pyruvoyl group at its N-terminus.

Its subcellular location is the cytoplasm. It catalyses the reaction L-aspartate + H(+) = beta-alanine + CO2. The protein operates within cofactor biosynthesis; (R)-pantothenate biosynthesis; beta-alanine from L-aspartate: step 1/1. Functionally, catalyzes the pyruvoyl-dependent decarboxylation of aspartate to produce beta-alanine. This Staphylococcus aureus (strain MSSA476) protein is Aspartate 1-decarboxylase.